A 252-amino-acid chain; its full sequence is Putative teichuronic acid biosynthesis glycosyltransferase TuaG (252 aa).

Belongs to the glycosyltransferase 2 family.

Its pathway is cell wall biogenesis; teichuronic acid biosynthesis. In Bacillus subtilis (strain 168), this protein is Putative teichuronic acid biosynthesis glycosyltransferase TuaG (tuaG).